An 871-amino-acid polypeptide reads, in one-letter code: Probable receptor-like protein kinase At2g21480 (871 aa).

An N-terminal signal peptide occupies residues 1-39; sequence MEIRKKPNIPMCLVLDSSSRPFMTLLFTILLFLTGLASA. Topologically, residues 40–439 are extracellular; sequence VGAVGGSPTA…GQRASMGKQG (400 aa). 5 N-linked (GlcNAc...) asparagine glycosylation sites follow: Asn-169, Asn-182, Asn-253, Asn-316, and Asn-381. The chain crosses the membrane as a helical span at residues 440-460; it reads MVATAGFVMMFGAFVGLGAMV. Residues 461 to 871 lie on the Cytoplasmic side of the membrane; sequence YKWKKRPQDW…FTQFASLNGR (411 aa). One can recognise a Protein kinase domain in the interval 525-797; the sequence is FDASEIIGVG…GDVLWNLEYA (273 aa). ATP-binding positions include 531 to 539 and Lys-553; that span reads IGVGGFGNV. The Proton acceptor role is filled by Asp-649. The interval 808-871 is disordered; it reads KAEAEEVETP…FTQFASLNGR (64 aa). Residues 817 to 839 are compositionally biased toward low complexity; it reads PKPVAVPAAAPTSPAATTAAASE. Positions 854-871 are enriched in polar residues; the sequence is DQHSGTTMFTQFASLNGR.

The protein belongs to the protein kinase superfamily. Ser/Thr protein kinase family.

The protein resides in the membrane. This chain is Probable receptor-like protein kinase At2g21480, found in Arabidopsis thaliana (Mouse-ear cress).